A 312-amino-acid chain; its full sequence is tRNA dimethylallyltransferase (312 aa).

18–25 (GPTASGKS) is a binding site for ATP. Position 20–25 (20–25 (TASGKS)) interacts with substrate. Interaction with substrate tRNA stretches follow at residues 43-46 (DSMQ) and 167-171 (QRILR).

This sequence belongs to the IPP transferase family. As to quaternary structure, monomer. It depends on Mg(2+) as a cofactor.

The enzyme catalyses adenosine(37) in tRNA + dimethylallyl diphosphate = N(6)-dimethylallyladenosine(37) in tRNA + diphosphate. Its function is as follows. Catalyzes the transfer of a dimethylallyl group onto the adenine at position 37 in tRNAs that read codons beginning with uridine, leading to the formation of N6-(dimethylallyl)adenosine (i(6)A). In Azorhizobium caulinodans (strain ATCC 43989 / DSM 5975 / JCM 20966 / LMG 6465 / NBRC 14845 / NCIMB 13405 / ORS 571), this protein is tRNA dimethylallyltransferase.